We begin with the raw amino-acid sequence, 349 residues long: tRNA N6-adenosine threonylcarbamoyltransferase (349 aa).

2 residues coordinate Fe cation: histidine 116 and histidine 120. Residues 139–143 (LVSGG), aspartate 172, glycine 185, and asparagine 283 contribute to the substrate site. Aspartate 311 contributes to the Fe cation binding site.

It belongs to the KAE1 / TsaD family. The cofactor is Fe(2+).

It localises to the cytoplasm. It carries out the reaction L-threonylcarbamoyladenylate + adenosine(37) in tRNA = N(6)-L-threonylcarbamoyladenosine(37) in tRNA + AMP + H(+). Required for the formation of a threonylcarbamoyl group on adenosine at position 37 (t(6)A37) in tRNAs that read codons beginning with adenine. Is involved in the transfer of the threonylcarbamoyl moiety of threonylcarbamoyl-AMP (TC-AMP) to the N6 group of A37, together with TsaE and TsaB. TsaD likely plays a direct catalytic role in this reaction. The protein is tRNA N6-adenosine threonylcarbamoyltransferase of Colwellia psychrerythraea (strain 34H / ATCC BAA-681) (Vibrio psychroerythus).